We begin with the raw amino-acid sequence, 313 residues long: D-alanine--D-alanine ligase (313 aa).

In terms of domain architecture, ATP-grasp spans K108–S308. Residue V138 to Y193 participates in ATP binding. Mg(2+)-binding residues include D262, E275, and N277.

The protein belongs to the D-alanine--D-alanine ligase family. Mg(2+) serves as cofactor. Mn(2+) is required as a cofactor.

Its subcellular location is the cytoplasm. It carries out the reaction 2 D-alanine + ATP = D-alanyl-D-alanine + ADP + phosphate + H(+). Its pathway is cell wall biogenesis; peptidoglycan biosynthesis. Its function is as follows. Cell wall formation. This is D-alanine--D-alanine ligase from Burkholderia multivorans (strain ATCC 17616 / 249).